Here is a 308-residue protein sequence, read N- to C-terminus: Ornithine carbamoyltransferase (308 aa).

Carbamoyl phosphate contacts are provided by residues Ser52–Thr55, Gln79, Arg103, and His130–Gln133. Residues Asn162, Asp224, and Ser228–Met229 contribute to the L-ornithine site. Carbamoyl phosphate-binding positions include Cys264–Leu265 and Arg292.

This sequence belongs to the aspartate/ornithine carbamoyltransferase superfamily. OTCase family.

The protein localises to the cytoplasm. The catalysed reaction is carbamoyl phosphate + L-ornithine = L-citrulline + phosphate + H(+). The protein operates within amino-acid biosynthesis; L-arginine biosynthesis; L-arginine from L-ornithine and carbamoyl phosphate: step 1/3. Reversibly catalyzes the transfer of the carbamoyl group from carbamoyl phosphate (CP) to the N(epsilon) atom of ornithine (ORN) to produce L-citrulline. The chain is Ornithine carbamoyltransferase from Pyrobaculum calidifontis (strain DSM 21063 / JCM 11548 / VA1).